The primary structure comprises 183 residues: Chromophore lyase CpcT/CpeT 4 (183 aa).

It belongs to the CpcT/CpeT biliprotein lyase family.

Covalently attaches a chromophore to Cys residue(s) of phycobiliproteins. In Gloeobacter violaceus (strain ATCC 29082 / PCC 7421), this protein is Chromophore lyase CpcT/CpeT 4.